We begin with the raw amino-acid sequence, 348 residues long: Protein pelota homolog (348 aa).

Belongs to the eukaryotic release factor 1 family. Pelota subfamily. In terms of assembly, monomer. A divalent metal cation serves as cofactor.

Its subcellular location is the cytoplasm. Functionally, may function in recognizing stalled ribosomes, interact with stem-loop structures in stalled mRNA molecules, and effect endonucleolytic cleavage of the mRNA. May play a role in the release non-functional ribosomes and degradation of damaged mRNAs. Has endoribonuclease activity. In Methanococcus maripaludis (strain C6 / ATCC BAA-1332), this protein is Protein pelota homolog.